Reading from the N-terminus, the 1083-residue chain is FACT complex subunit spt16 (1083 aa).

Ser-437 carries the post-translational modification Phosphoserine. Residues 466 to 504 (LESKLRNEINTEEKRKEHQRELAQQLNERAKDRLARQGN) adopt a coiled-coil conformation. The tract at residues 923-1083 (FEQGGWTFLD…NGHKSKKSRH (161 aa)) is disordered. Positions 935 to 987 (SGSEGENETAESEEDEAYNPTDAESDEESDEDSEYSEASEDSEESDEDLGSDE) are enriched in acidic residues. The segment covering 988-1023 (ESGKDWSDLEREAAEEDRNHDYAADDKPRNGKFDSK) has biased composition (basic and acidic residues). Basic residues predominate over residues 1024 to 1033 (KHGKSSKHSP). A compositionally biased stretch (basic and acidic residues) spans 1058–1076 (SSKDKDRKRSRDDSRDNGH).

The protein belongs to the peptidase M24 family. SPT16 subfamily. As to quaternary structure, component of the FACT complex, a stable heterodimer of dre4/spt16 and Ssrp. Interacts with TRL/GAGA.

The protein localises to the nucleus. Its subcellular location is the chromosome. Component of the FACT complex, a general chromatin factor that acts to reorganize nucleosomes. The FACT complex is involved in multiple processes that require DNA as a template such as mRNA elongation, DNA replication and DNA repair. During transcription elongation the FACT complex acts as a histone chaperone that both destabilizes and restores nucleosomal structure. It facilitates the passage of RNA polymerase II and transcription by promoting the dissociation of one histone H2A-H2B dimer from the nucleosome, then subsequently promotes the reestablishment of the nucleosome following the passage of RNA polymerase II. The FACT complex is required for expression of Hox genes. The chain is FACT complex subunit spt16 (dre4) from Drosophila melanogaster (Fruit fly).